A 204-amino-acid polypeptide reads, in one-letter code: Somatotropin (204 aa).

The signal sequence occupies residues 1–17 (MDKVLFLLFVLSLGVSS). At glutamine 18 the chain carries Pyrrolidone carboxylic acid. A Zn(2+)-binding site is contributed by histidine 36. A disulfide bond links cysteine 69 and cysteine 177. A Zn(2+)-binding site is contributed by glutamate 186. Cysteines 194 and 202 form a disulfide.

This sequence belongs to the somatotropin/prolactin family.

The protein resides in the secreted. In terms of biological role, growth hormone plays an important role in growth control and is involved in the regulation of several anabolic processes. Implicated as an osmoregulatory substance important for seawater adaptation. In Trichopodus trichopterus (Three spot gourami), this protein is Somatotropin (gh).